The following is a 103-amino-acid chain: N(4)-acetylcytidine amidohydrolase (103 aa).

Residues 6-92 (TFFERFEPGI…VIQEIYPGLE (87 aa)) enclose the ASCH domain. Residue lysine 20 is the Proton acceptor of the active site. Threonine 23 functions as the Nucleophile in the catalytic mechanism. Glutamate 73 functions as the Proton donor in the catalytic mechanism.

Belongs to the N(4)-acetylcytidine amidohydrolase family.

It carries out the reaction N(4)-acetylcytidine + H2O = cytidine + acetate + H(+). The catalysed reaction is N(4)-acetyl-2'-deoxycytidine + H2O = 2'-deoxycytidine + acetate + H(+). It catalyses the reaction N(4)-acetylcytosine + H2O = cytosine + acetate + H(+). Its function is as follows. Catalyzes the hydrolysis of N(4)-acetylcytidine (ac4C). The sequence is that of N(4)-acetylcytidine amidohydrolase from Shewanella sp. (strain MR-7).